We begin with the raw amino-acid sequence, 172 residues long: Stellate protein CG33237 (172 aa).

Belongs to the casein kinase 2 subunit beta family. In terms of assembly, interacts in vitro with the casein kinase 2 alpha subunit (CkII-alpha). The relevance of such interaction is however unclear in vivo. In terms of tissue distribution, probably not expressed in wild-type flies. In males lacking the Y chromosome, it is testis-specific and constitutes the main component of star-shaped crystals.

In terms of biological role, unknown. In males lacking the Y chromosome, its strong overexpression leads to the appearance of proteinaceous star-shaped crystals in the primary spermatocytes causing meiotic drive, possibly by interfering with normal casein kinase 2 activity. This is Stellate protein CG33237 (Ste:CG33237) from Drosophila melanogaster (Fruit fly).